A 152-amino-acid chain; its full sequence is Cytochrome c-type biogenesis CcmH-like mitochondrial protein (152 aa).

At 1–83 (MATEEDVKQR…ILYTPKFDLQ (83 aa)) the chain is on the mitochondrial intermembrane side. Cys-26 and Cys-29 together coordinate heme. The chain crosses the membrane as a helical span at residues 84–104 (TAAIWLSPVIVGGVAAGVWAY). The Mitochondrial matrix segment spans residues 105–152 (QKHRQRTNVHIMALNLVRGVPLTPREKETMLDVLTPPPPANKWWWPGK).

Belongs to the CcmH/CycL/Ccl2/NrfF family.

It is found in the mitochondrion inner membrane. Plays a role in mitochondrial cytochrome c maturation. Probable component of a heme lyase complex involved in the reduction of apocytochrome c. The protein is Cytochrome c-type biogenesis CcmH-like mitochondrial protein of Oryza sativa subsp. japonica (Rice).